Consider the following 133-residue polypeptide: ATP synthase epsilon chain (133 aa).

The protein belongs to the ATPase epsilon chain family. As to quaternary structure, F-type ATPases have 2 components, CF(1) - the catalytic core - and CF(0) - the membrane proton channel. CF(1) has five subunits: alpha(3), beta(3), gamma(1), delta(1), epsilon(1). CF(0) has three main subunits: a, b and c.

The protein localises to the cell membrane. In terms of biological role, produces ATP from ADP in the presence of a proton gradient across the membrane. The polypeptide is ATP synthase epsilon chain (Lawsonia intracellularis (strain PHE/MN1-00)).